The primary structure comprises 76 residues: uncharacterized protein (76 aa).

This is an uncharacterized protein from Acidianus bottle-shaped virus (isolate Italy/Pozzuoli) (ABV).